Here is a 220-residue protein sequence, read N- to C-terminus: GTP-binding nuclear protein GSP2/CNR2 (220 aa).

S2 is modified (N-acetylserine). S2 is modified (phosphoserine). A Small GTPase Ran-type domain is found at E10–N174. D21–T28 is a binding site for GTP. The interval K40 to V48 is switch-I. GTP contacts are provided by residues G71, N125–D128, and S153–K155. Residues G71–Q87 form a switch-II region.

This sequence belongs to the small GTPase superfamily. Ran family. As to quaternary structure, found in a nuclear export complex with RanGTP, exportin and pre-miRNA.

The protein resides in the nucleus. Its function is as follows. GTP-binding protein involved in nucleocytoplasmic transport. Required for the import of protein into the nucleus and also for RNA export. Not essential for cell viability. The polypeptide is GTP-binding nuclear protein GSP2/CNR2 (GSP2) (Saccharomyces cerevisiae (strain ATCC 204508 / S288c) (Baker's yeast)).